We begin with the raw amino-acid sequence, 288 residues long: Glucose-1-phosphate thymidylyltransferase (288 aa).

Residue glycine 8 participates in dTDP-alpha-D-glucose binding. Glycine 8, glycine 11, threonine 12, arginine 13, lysine 23, glutamine 24, glutamine 80, glycine 85, and aspartate 108 together coordinate dTTP. DTDP-alpha-D-glucose is bound by residues lysine 23, glutamine 24, glutamine 80, glycine 85, aspartate 108, asparagine 109, glycine 143, glutamate 158, lysine 159, valine 169, and aspartate 222. Aspartate 108 contacts Mg(2+). Aspartate 222 contacts Mg(2+).

The protein belongs to the glucose-1-phosphate thymidylyltransferase family. Mg(2+) serves as cofactor.

The enzyme catalyses dTTP + alpha-D-glucose 1-phosphate + H(+) = dTDP-alpha-D-glucose + diphosphate. It functions in the pathway carbohydrate biosynthesis; dTDP-L-rhamnose biosynthesis. Functionally, catalyzes the conversion of glucose-1-phosphate and dTTP to dTDP-glucose and pyrophosphate. Involved in the biosynthesis of the dTDP-L-rhamnose which is a component of the critical linker, D-N-acetylglucosamine-L-rhamnose disaccharide, which connects the galactan region of arabinogalactan to peptidoglycan via a phosphodiester linkage. This is Glucose-1-phosphate thymidylyltransferase (rmlA) from Mycobacterium tuberculosis (strain CDC 1551 / Oshkosh).